Here is a 305-residue protein sequence, read N- to C-terminus: HPr kinase/phosphorylase (305 aa).

Catalysis depends on residues His-138 and Lys-159. ATP is bound at residue 153-160 (GESGIGKS). Mg(2+) is bound at residue Ser-160. Residue Asp-177 is the Proton acceptor; for phosphorylation activity. Proton donor; for dephosphorylation activity of the active site. The segment at 201 to 210 (IEIRGIGILD) is important for the catalytic mechanism of both phosphorylation and dephosphorylation. Glu-202 contacts Mg(2+). The active site involves Arg-243. Residues 264–269 (PVRPGR) are important for the catalytic mechanism of dephosphorylation.

The protein belongs to the HPrK/P family. In terms of assembly, homohexamer. Mg(2+) serves as cofactor.

It carries out the reaction [HPr protein]-L-serine + ATP = [HPr protein]-O-phospho-L-serine + ADP + H(+). It catalyses the reaction [HPr protein]-O-phospho-L-serine + phosphate + H(+) = [HPr protein]-L-serine + diphosphate. In terms of biological role, catalyzes the ATP- as well as the pyrophosphate-dependent phosphorylation of a specific serine residue in HPr, a phosphocarrier protein of the phosphoenolpyruvate-dependent sugar phosphotransferase system (PTS). HprK/P also catalyzes the pyrophosphate-producing, inorganic phosphate-dependent dephosphorylation (phosphorolysis) of seryl-phosphorylated HPr (P-Ser-HPr). The two antagonistic activities of HprK/P are regulated by several intracellular metabolites, which change their concentration in response to the absence or presence of rapidly metabolisable carbon sources (glucose, fructose, etc.) in the growth medium. Therefore, by controlling the phosphorylation state of HPr, HPrK/P is a sensor enzyme that plays a major role in the regulation of carbon metabolism and sugar transport: it mediates carbon catabolite repression (CCR), and regulates PTS-catalyzed carbohydrate uptake and inducer exclusion. The chain is HPr kinase/phosphorylase from Caldanaerobacter subterraneus subsp. tengcongensis (strain DSM 15242 / JCM 11007 / NBRC 100824 / MB4) (Thermoanaerobacter tengcongensis).